A 152-amino-acid polypeptide reads, in one-letter code: Small ribosomal subunit protein uS13 (152 aa).

The protein belongs to the universal ribosomal protein uS13 family. As to quaternary structure, component of the small ribosomal subunit.

Its subcellular location is the cytoplasm. Its function is as follows. Component of the small ribosomal subunit. The ribosome is a large ribonucleoprotein complex responsible for the synthesis of proteins in the cell. This is Small ribosomal subunit protein uS13 (rps18) from Ictalurus punctatus (Channel catfish).